Here is an 805-residue protein sequence, read N- to C-terminus: RFX-like transcription factor daf-19 (805 aa).

A compositionally biased stretch (polar residues) spans 1–14 (MTNEEPVPSTSSVL). The disordered stretch occupies residues 1 to 113 (MTNEEPVPST…TPRKKMEPED (113 aa)). The segment covering 19–92 (KNVKIETPSR…DSKSLSKETH (74 aa)) has biased composition (basic and acidic residues). Residues 93–104 (NTISTRSSSSGT) are compositionally biased toward polar residues. A DNA-binding region (RFX-type winged-helix) is located at residues 260–334 (TVNWLFENYE…YHYYGIRLKD (75 aa)).

It belongs to the RFX family. As to expression, ciliated sensory neurons. In terms of tissue distribution, expressed in the male tail HOB and RnB neurons but not in male-specific CEM head neurons or other ciliated neurons.

The protein resides in the nucleus. Functionally, probable transcription factor. May regulate some genes of ciliated sensory neurons. May activate the expression of the shared components of sensory cilia, but not the cell-type-specific expression. Together with transcription factor atf-7, involved in regulation of the serotonergic response of ADF neurons to pathogenic food. In terms of biological role, involved in male mating behavior; may play a role in functional specialization of PKD ciliated sensory neurons. The chain is RFX-like transcription factor daf-19 from Caenorhabditis elegans.